An 856-amino-acid polypeptide reads, in one-letter code: DNA mismatch repair protein MutS (856 aa).

ATP is bound at residue 617-624; that stretch reads GPNMGGKS.

This sequence belongs to the DNA mismatch repair MutS family.

Functionally, this protein is involved in the repair of mismatches in DNA. It is possible that it carries out the mismatch recognition step. This protein has a weak ATPase activity. The sequence is that of DNA mismatch repair protein MutS from Psychromonas ingrahamii (strain DSM 17664 / CCUG 51855 / 37).